The following is a 111-amino-acid chain: Complement inhibitor CirpT1 (111 aa).

Positions Met1 to Phe19 are cleaved as a signal peptide. 4 disulfides stabilise this stretch: Cys40–Cys64, Cys59–Cys98, Cys76–Cys99, and Cys85–Cys104.

This sequence belongs to the CirpT family. Expressed in salivary glands.

The protein resides in the secreted. Functionally, complement inhibitor. Prevents complement-mediated activation of C5 by sterically preventing direct binding of C5 to its convertase (binding with domains MG4 and MG5). Binds C5 at a different binding site than the other tick complement inhibitors OmCI and RaCI3, and the drug eculizumab. Inhibits the complement in human, rat and guinea pig, and also shows a reduced inhibition in rabbit and pig. The sequence is that of Complement inhibitor CirpT1 from Rhipicephalus pulchellus (Yellow backed tick).